Reading from the N-terminus, the 476-residue chain is Retinoic acid receptor gamma (476 aa).

Residues 1 to 109 form a modulating region; it reads MANSSKERLC…PPPPPRVYKP (109 aa). Residues 81–96 are compositionally biased toward low complexity; that stretch reads STVETQSTSSEEMVPS. The disordered stretch occupies residues 81–102; the sequence is STVETQSTSSEEMVPSSPSPPP. NR C4-type zinc fingers lie at residues 110-130 and 146-170; these read CFVC…CEGC and CHRD…LQKC. The nuclear receptor DNA-binding region spans 110-175; it reads CFVCNDKSSG…RLQKCFQVGM (66 aa). Positions 176 to 205 are hinge; it reads SKEAVRNDRNKKKKEIKEEVVLPDSYEMPP. The short motif at 184 to 189 is the Nuclear localization signal element; the sequence is RNKKKK. Positions 206–440 constitute an NR LBD domain; the sequence is EMEELIQKVS…PLIREMLENP (235 aa). Positions 435–476 are disordered; it reads EMLENPEAFEDGAATPKPSERSSSESSNGSPTGEDSSGSKTP. Polar residues predominate over residues 462–476; sequence NGSPTGEDSSGSKTP.

Belongs to the nuclear hormone receptor family. NR1 subfamily. As to quaternary structure, heterodimer; with a rxr molecule. Binds DNA preferentially as a rar/rxr heterodimer. Expressed in embryos, tadpoles and various adult tissue such as kidney, testis, brain, liver, skeletal muscle and spleen.

It is found in the nucleus. Receptor for retinoic acid. Retinoic acid receptors bind as heterodimers to their target response elements in response to their ligands, all-trans or 9-cis retinoic acid, and regulate gene expression in various biological processes. The rar/rxr heterodimers bind to the retinoic acid response elements (RARE) composed of tandem 5'-AGGTCA-3' sites known as DR1-DR5. The polypeptide is Retinoic acid receptor gamma (rarg) (Xenopus laevis (African clawed frog)).